Consider the following 142-residue polypeptide: SLTDKDKATVKALWGKISKSADAVGADAVGRMIVVYPQTKTYFSHWPDLAPNSPHVKTHGKTVMTGIALAVSKIDDLTNGLLELSEEHAYKMRVDPANFKILSHCMLVVIATMFPKEFTPEAHVCLDKFLCAVSLALSERYR.

An N-acetylserine modification is found at serine 1. The Globin domain maps to 1–142 (SLTDKDKATV…VSLALSERYR (142 aa)). Histidine 59 is an O2 binding site. Histidine 88 provides a ligand contact to heme b.

This sequence belongs to the globin family. As to quaternary structure, hb1 is a heterotetramer of two alpha chains and two beta-1 chains. Hb2 is a heterotetramer of two alpha chains and two beta-2 chains. As to expression, red blood cells.

Involved in oxygen transport from gills to the various peripheral tissues. This Pseudaphritis urvillii (Congolli) protein is Hemoglobin subunit alpha (hba).